Consider the following 277-residue polypeptide: Large ribosomal subunit protein uL2 (277 aa).

A disordered region spans residues 225-277; sequence MNPVDHPHGGGEGKTSGGRNSVTPWGVPTKGKKTRKRGKHSDKYIKVSSVRKR. Positions 254 to 264 are enriched in basic residues; it reads KGKKTRKRGKH.

Belongs to the universal ribosomal protein uL2 family. In terms of assembly, part of the 50S ribosomal subunit. Forms a bridge to the 30S subunit in the 70S ribosome.

Functionally, one of the primary rRNA binding proteins. Required for association of the 30S and 50S subunits to form the 70S ribosome, for tRNA binding and peptide bond formation. It has been suggested to have peptidyltransferase activity; this is somewhat controversial. Makes several contacts with the 16S rRNA in the 70S ribosome. This Anaplasma marginale (strain Florida) protein is Large ribosomal subunit protein uL2.